The sequence spans 180 residues: 3-phenylpropionate/cinnamic acid dioxygenase subunit beta (180 aa).

It belongs to the bacterial ring-hydroxylating dioxygenase beta subunit family. This dioxygenase system consists of four proteins: the two subunits of the hydroxylase component (HcaE and HcaF), a ferredoxin (HcaC) and a ferredoxin reductase (HcaD).

The enzyme catalyses 3-phenylpropanoate + NADH + O2 + H(+) = 3-(cis-5,6-dihydroxycyclohexa-1,3-dien-1-yl)propanoate + NAD(+). It catalyses the reaction (E)-cinnamate + NADH + O2 + H(+) = (2E)-3-(cis-5,6-dihydroxycyclohexa-1,3-dien-1-yl)prop-2-enoate + NAD(+). It participates in aromatic compound metabolism; 3-phenylpropanoate degradation. In terms of biological role, part of the multicomponent 3-phenylpropionate dioxygenase. Converts 3-phenylpropionic acid (PP) and cinnamic acid (CI) into 3-phenylpropionate-dihydrodiol (PP-dihydrodiol) and cinnamic acid-dihydrodiol (CI-dihydrodiol), respectively. This is 3-phenylpropionate/cinnamic acid dioxygenase subunit beta from Photorhabdus laumondii subsp. laumondii (strain DSM 15139 / CIP 105565 / TT01) (Photorhabdus luminescens subsp. laumondii).